Reading from the N-terminus, the 296-residue chain is Formamidopyrimidine-DNA glycosylase (296 aa).

The active-site Schiff-base intermediate with DNA is Pro-2. The active-site Proton donor is Glu-3. The active-site Proton donor; for beta-elimination activity is the Lys-58. The DNA site is built by His-106, Arg-125, and Lys-167. The segment at 258–294 (RVYDRVGLPCSRPGCAGAITRIVQANRSTFFCATCQP) adopts an FPG-type zinc-finger fold. Arg-284 acts as the Proton donor; for delta-elimination activity in catalysis.

The protein belongs to the FPG family. Monomer. Zn(2+) serves as cofactor.

The catalysed reaction is Hydrolysis of DNA containing ring-opened 7-methylguanine residues, releasing 2,6-diamino-4-hydroxy-5-(N-methyl)formamidopyrimidine.. It catalyses the reaction 2'-deoxyribonucleotide-(2'-deoxyribose 5'-phosphate)-2'-deoxyribonucleotide-DNA = a 3'-end 2'-deoxyribonucleotide-(2,3-dehydro-2,3-deoxyribose 5'-phosphate)-DNA + a 5'-end 5'-phospho-2'-deoxyribonucleoside-DNA + H(+). Its function is as follows. Involved in base excision repair of DNA damaged by oxidation or by mutagenic agents. Acts as a DNA glycosylase that recognizes and removes damaged bases. Has a preference for oxidized purines, such as 7,8-dihydro-8-oxoguanine (8-oxoG). Has AP (apurinic/apyrimidinic) lyase activity and introduces nicks in the DNA strand. Cleaves the DNA backbone by beta-delta elimination to generate a single-strand break at the site of the removed base with both 3'- and 5'-phosphates. In Methylobacterium radiotolerans (strain ATCC 27329 / DSM 1819 / JCM 2831 / NBRC 15690 / NCIMB 10815 / 0-1), this protein is Formamidopyrimidine-DNA glycosylase.